The following is a 487-amino-acid chain: Lysophospholipid acyltransferase 5 (487 aa).

Ala2 is modified (N-acetylalanine). Helical transmembrane passes span 44 to 64 (LIFS…YLFY), 67 to 87 (SYLI…FNFG), 111 to 131 (ITAV…GYYY), 178 to 198 (ILGV…GAFL), 236 to 256 (LGLV…EDYL), and 285 to 305 (VTCW…FNGF). The N-linked (GlcNAc...) asparagine glycan is linked to Asn308. Residues Asn338 and His374 contribute to the active site. 3 consecutive transmembrane segments (helical) span residues 364–384 (GLSL…LICF), 422–442 (LVQQ…FCLF), and 453–473 (SIYF…PYVY). The Di-lysine motif motif lies at 484–487 (KKRE).

This sequence belongs to the membrane-bound acyltransferase family.

It is found in the endoplasmic reticulum membrane. It catalyses the reaction a 1-acyl-sn-glycero-3-phosphocholine + an acyl-CoA = a 1,2-diacyl-sn-glycero-3-phosphocholine + CoA. The catalysed reaction is a 1-acyl-sn-glycero-3-phosphoethanolamine + an acyl-CoA = a 1,2-diacyl-sn-glycero-3-phosphoethanolamine + CoA. It carries out the reaction a 1-acyl-sn-glycero-3-phospho-L-serine + an acyl-CoA = a 1,2-diacyl-sn-glycero-3-phospho-L-serine + CoA. The enzyme catalyses (9Z,12Z)-octadecadienoyl-CoA + a 1-acyl-sn-glycero-3-phosphocholine = 1-acyl-2-(9Z,12Z)-octadecadienoyl-sn-glycero-3-phosphocholine + CoA. It catalyses the reaction (5Z,8Z,11Z,14Z)-eicosatetraenoyl-CoA + a 1-acyl-sn-glycero-3-phosphocholine = 1-acyl-2-(5Z,8Z,11Z,14Z-eicosatetraenoyl)-sn-glycero-3-phosphocholine + CoA. The catalysed reaction is dodecanoyl-CoA + 1-hexadecanoyl-sn-glycero-3-phosphocholine = 1-hexadecanoyl-2-dodecanoyl-sn-glycero-3-phosphocholine + CoA. It carries out the reaction octadecanoyl-CoA + 1-hexadecanoyl-sn-glycero-3-phosphocholine = 1-hexadecanoyl-2-octadecanoyl-sn-glycero-3-phosphocholine + CoA. The enzyme catalyses 1-dodecanoyl-sn-glycero-3-phosphocholine + hexadecanoyl-CoA = 1-dodecanoyl-2-hexadecanoyl-sn-glycero-3-phosphocholine + CoA. It catalyses the reaction 1-tetradecanoyl-sn-glycero-3-phosphocholine + hexadecanoyl-CoA = 1-tetradecanoyl-2-hexadecanoyl-sn-glycero-3-phosphocholine + CoA. The catalysed reaction is 1-hexadecanoyl-sn-glycero-3-phosphocholine + hexadecanoyl-CoA = 1,2-dihexadecanoyl-sn-glycero-3-phosphocholine + CoA. It carries out the reaction 1-octadecanoyl-sn-glycero-3-phosphocholine + hexadecanoyl-CoA = 1-octadecanoyl-2-hexadecanoyl-sn-glycero-3-phosphocholine + CoA. The enzyme catalyses 1-(9Z-octadecenoyl)-sn-glycero-3-phosphocholine + hexadecanoyl-CoA = 1-(9Z-octadecenoyl)-2-hexadecanoyl-sn-glycero-3-phosphocholine + CoA. It catalyses the reaction (9Z)-hexadecenoyl-CoA + 1-hexadecanoyl-sn-glycero-3-phosphocholine = 1-hexadecanoyl-2-(9Z-hexadecenoyl)-sn-glycero-3-phosphocholine + CoA. The catalysed reaction is 1-hexadecanoyl-sn-glycero-3-phosphocholine + (9Z)-octadecenoyl-CoA = 1-hexadecanoyl-2-(9Z-octadecenoyl)-sn-glycero-3-phosphocholine + CoA. It carries out the reaction (9Z,12Z)-octadecadienoyl-CoA + 1-hexadecanoyl-sn-glycero-3-phosphocholine = 1-hexadecanoyl-2-(9Z,12Z-octadecadienoyl)-sn-glycero-3-phosphocholine + CoA. The enzyme catalyses 1-dodecanoyl-sn-glycero-3-phosphocholine + (5Z,8Z,11Z,14Z)-eicosatetraenoyl-CoA = 1-dodecanoyl-2-(5Z,8Z,11Z,14Z)-eicosatetraenoyl-sn-glycero-3-phosphocholine + CoA. It catalyses the reaction (5Z,8Z,11Z,14Z)-eicosatetraenoyl-CoA + 1-hexadecanoyl-sn-glycero-3-phosphocholine = 1-hexadecanoyl-2-(5Z,8Z,11Z,14Z-eicosatetraenoyl)-sn-glycero-3-phosphocholine + CoA. The catalysed reaction is 1-octadecanoyl-sn-glycero-3-phosphocholine + (5Z,8Z,11Z,14Z)-eicosatetraenoyl-CoA = 1-octadecanoyl-2-(5Z,8Z,11Z,14Z-eicosatetraenoyl)-sn-glycero-3-phosphocholine + CoA. It carries out the reaction 1-eicosanoyl-sn-glycero-3-phosphocholine + (5Z,8Z,11Z,14Z)-eicosatetraenoyl-CoA = 1-eicosanoyl-2-(5Z,8Z,11Z,14Z)-eicosatetraenoyl-sn-glycero-3-phosphocholine + CoA. The enzyme catalyses 1-(9Z-octadecenoyl)-sn-glycero-3-phosphocholine + (9Z)-octadecenoyl-CoA = 1,2-di-(9Z-octadecenoyl)-sn-glycero-3-phosphocholine + CoA. It catalyses the reaction 1-(9Z-octadecenoyl)-sn-glycero-3-phosphocholine + (9Z,12Z)-octadecadienoyl-CoA = 1-(9Z)-octadecenoyl-2-(9Z,12Z)-octadecadienoyl-sn-glycero-3-phosphocholine + CoA. The catalysed reaction is 1-(9Z-octadecenoyl)-sn-glycero-3-phosphocholine + (5Z,8Z,11Z,14Z)-eicosatetraenoyl-CoA = 1-(9Z)-octadecenoyl-2-(5Z,8Z,11Z,14Z)-icosatetraenoyl-sn-glycero-3-phosphocholine + CoA. It carries out the reaction a 1-acyl-sn-glycero-3-phosphoethanolamine + (9Z,12Z)-octadecadienoyl-CoA = 1-acyl-2-(9Z,12Z)-octadecadienoyl-sn-glycero-3-phosphoethanolamine + CoA. The enzyme catalyses 1-(9Z-octadecenoyl)-sn-glycero-3-phosphoethanolamine + (9Z,12Z)-octadecadienoyl-CoA = 1-(9Z)-octadecenoyl-2-(9Z,12Z)-octadecadienoyl-sn-glycero-3-phosphoethanolamine + CoA. It catalyses the reaction 1-(10Z-heptadecenoyl)-sn-glycero-3-phosphoethanolamine + (9Z,12Z)-octadecadienoyl-CoA = 1-(10Z-heptadecenoyl)-2-(9Z,12Z-octadecadienoyl)-sn-glycero-3-phosphoethanolamine + CoA. The catalysed reaction is a 1-acyl-sn-glycero-3-phosphoethanolamine + (5Z,8Z,11Z,14Z)-eicosatetraenoyl-CoA = 1-acyl-2-(5Z,8Z,11Z,14Z)-eicosatetraenoyl-sn-glycero-3-phosphoethanolamine + CoA. It carries out the reaction 1-hexadecanoyl-sn-glycero-3-phosphoethanolamine + (5Z,8Z,11Z,14Z)-eicosatetraenoyl-CoA = 1-hexadecanoyl-2-(5Z,8Z,11Z,14Z-eicosatetraenoyl)-sn-glycero-3-phosphoethanolamine + CoA. The enzyme catalyses 1-(9Z-octadecenoyl)-sn-glycero-3-phosphoethanolamine + (5Z,8Z,11Z,14Z)-eicosatetraenoyl-CoA = 1-(9Z)-octadecenoyl-2-(5Z,8Z,11Z,14Z)-eicosatetraenoyl-sn-glycero-3-phosphoethanolamine + CoA. It catalyses the reaction 1-(10Z-heptadecenoyl)-sn-glycero-3-phosphoethanolamine + (5Z,8Z,11Z,14Z)-eicosatetraenoyl-CoA = 1-(10Z-heptadecenoyl)-2-(5Z,8Z,11Z,14Z-eicosatetraenoyl)-sn-glycero-3-phosphoethanolamine + CoA. The catalysed reaction is a 1-O-(1Z-alkenyl)-sn-glycero-3-phosphoethanolamine + (5Z,8Z,11Z,14Z)-eicosatetraenoyl-CoA = 1-O-(1Z)-alkenyl-2-(5Z,8Z,11Z,14Z)-eicosatetraenoyl-sn-glycero-3-phosphoethanolamine + CoA. It carries out the reaction a 1-acyl-sn-glycero-3-phospho-L-serine + (9Z,12Z)-octadecadienoyl-CoA = 1-acyl-2-(9Z,12Z-octadecadienoyl)-sn-glycero-3-phospho-L-serine + CoA. The enzyme catalyses a 1-acyl-sn-glycero-3-phospho-L-serine + (5Z,8Z,11Z,14Z)-eicosatetraenoyl-CoA = 1-acyl-2-(5Z,8Z,11Z,14Z-eicosatetraenoyl)-sn-glycero-3-phospho-L-serine + CoA. It catalyses the reaction 1-hexadecanoyl-sn-glycero-3-phospho-L-serine + (9Z)-octadecenoyl-CoA = 1-hexadecanoyl-2-(9Z-octadecenoyl)-sn-glycero-3-phospho-L-serine + CoA. The catalysed reaction is 1-(9Z-octadecenoyl)-sn-glycero-3-phospho-L-serine + (9Z)-octadecenoyl-CoA = 1,2-di-(9Z)-octadecenoyl-sn-glycero-3-phospho-L-serine + CoA. It carries out the reaction 1-hexadecanoyl-sn-glycero-3-phospho-L-serine + (9Z,12Z)-octadecadienoyl-CoA = 1-hexadecanoyl-2-(9Z,12Z-octadecadienoyl)-sn-glycero-3-phospho-L-serine + CoA. The enzyme catalyses 1-(9Z-octadecenoyl)-sn-glycero-3-phospho-L-serine + (9Z,12Z)-octadecadienoyl-CoA = 1-(9Z-octadecenoyl)-2-(9Z,12Z-octadienoyl)-sn-glycero-3-phospho-L-serine + CoA. It catalyses the reaction 1-hexadecanoyl-sn-glycero-3-phospho-L-serine + (5Z,8Z,11Z,14Z)-eicosatetraenoyl-CoA = 1-hexadecanoyl-2-(5Z,8Z,11Z,14Z-eicosatetraenoyl)-sn-glycero-3-phospho-L-serine + CoA. The catalysed reaction is 1-(9Z-octadecenoyl)-sn-glycero-3-phospho-L-serine + (5Z,8Z,11Z,14Z)-eicosatetraenoyl-CoA = 1-(9Z-octadecenoyl)-2-(5Z,8Z,11Z,14Z-eicosatetraenoyl)-sn-glycero-3-phospho-L-serine + CoA. It functions in the pathway lipid metabolism; phospholipid metabolism. Its function is as follows. Lysophospholipid O-acyltransferase (LPLAT) that catalyzes the reacylation step of the phospholipid remodeling process also known as the Lands cycle. Catalyzes transfer of the fatty acyl chain from fatty acyl-CoA to 1-acyl lysophospholipid to form various classes of phospholipids. Converts 1-acyl lysophosphatidylcholine (LPC) into phosphatidylcholine (PC) (LPCAT activity), 1-acyl lysophosphatidylserine (LPS) into phosphatidylserine (PS) (LPSAT activity) and 1-acyl lysophosphatidylethanolamine (LPE) into phosphatidylethanolamine (PE) (LPEAT activity). Favors polyunsaturated fatty acyl-CoAs as acyl donors compared to saturated fatty acyl-CoAs. Has higher activity for LPC acyl acceptors compared to LPEs and LPSs. Can also transfer the fatty acyl chain from fatty acyl-CoA to 1-O-alkyl lysophospholipid or 1-O-alkenyl lysophospholipid with lower efficiency. Acts as a major LPC O-acyltransferase in liver and intestine. As a component of the liver X receptor/NR1H3 or NR1H2 signaling pathway, mainly catalyzes the incorporation of arachidonate into PCs of endoplasmic reticulum (ER) membranes, increasing membrane dynamics and enabling triacylglycerols transfer to nascent very low-density lipoprotein (VLDL) particles. Promotes processing of sterol regulatory protein SREBF1 in hepatocytes, likely by facilitating the translocation of SREBF1-SCAP complex from ER to the Golgi apparatus. Participates in mechanisms by which the liver X receptor/NR1H3 or NR1H2 signaling pathway counteracts lipid-induced ER stress response and inflammation. Down-regulates hepatic inflammation by limiting arachidonic acid availability for synthesis of inflammatory eicosanoids, such as prostaglandins. In enterocytes, acts as a component of a gut-brain feedback loop that coordinates dietary lipid absorption and food intake. Regulates the abundance of PCs containing linoleate and arachidonate in enterocyte membranes, enabling passive diffusion of fatty acids and cholesterol across the membrane for efficient chylomicron assembly. In the intestinal crypt, acts as a component of dietary-responsive phospholipid-cholesterol axis, regulating the biosynthesis of cholesterol and its mitogenic effects on intestinal stem cells. This chain is Lysophospholipid acyltransferase 5 (Lpcat3), found in Rattus norvegicus (Rat).